Reading from the N-terminus, the 967-residue chain is Phosphatidylserine decarboxylase proenzyme 3 (967 aa).

The interval 217–255 is disordered; the sequence is FIAEPDSSIPPSESSVSISTDTGKETPPSKSKKSSNQPY. A compositionally biased stretch (low complexity) spans 220 to 237; that stretch reads EPDSSIPPSESSVSISTD. The region spanning 250–373 is the C2 domain; the sequence is SSNQPYVSIG…SSAQVDPETG (124 aa). 3 residues coordinate Ca(2+): Asp343, Ser346, and Asp349. The segment covering 532–544 has biased composition (low complexity); it reads DQQATQTPQSPSS. The tract at residues 532 to 566 is disordered; it reads DQQATQTPQSPSSNEESGPGTPTQTSDQYEDSEDS. The segment covering 545–558 has biased composition (polar residues); it reads NEESGPGTPTQTSD. Residues Asp769, His825, and Ser912 each act as charge relay system; for autoendoproteolytic cleavage activity in the active site. The active-site Schiff-base intermediate with substrate; via pyruvic acid; for decarboxylase activity is the Ser912. Ser912 is subject to Pyruvic acid (Ser); by autocatalysis. Residues 947-967 are disordered; sequence IGQKIDPNKPTDAEDHSKSDS.

This sequence belongs to the phosphatidylserine decarboxylase family. PSD-B subfamily. Eukaryotic type II sub-subfamily. As to quaternary structure, heterodimer of a large membrane-associated beta subunit and a small pyruvoyl-containing alpha subunit. Pyruvate serves as cofactor. It depends on Ca(2+) as a cofactor. Is synthesized initially as an inactive proenzyme. Formation of the active enzyme involves a self-maturation process in which the active site pyruvoyl group is generated from an internal serine residue via an autocatalytic post-translational modification. Two non-identical subunits are generated from the proenzyme in this reaction, and the pyruvate is formed at the N-terminus of the alpha chain, which is derived from the carboxyl end of the proenzyme. The autoendoproteolytic cleavage occurs by a canonical serine protease mechanism, in which the side chain hydroxyl group of the serine supplies its oxygen atom to form the C-terminus of the beta chain, while the remainder of the serine residue undergoes an oxidative deamination to produce ammonia and the pyruvoyl prosthetic group on the alpha chain. During this reaction, the Ser that is part of the protease active site of the proenzyme becomes the pyruvoyl prosthetic group, which constitutes an essential element of the active site of the mature decarboxylase.

The protein localises to the golgi apparatus membrane. Its subcellular location is the endosome membrane. The protein resides in the cytoplasm. It carries out the reaction a 1,2-diacyl-sn-glycero-3-phospho-L-serine + H(+) = a 1,2-diacyl-sn-glycero-3-phosphoethanolamine + CO2. It functions in the pathway phospholipid metabolism; phosphatidylethanolamine biosynthesis; phosphatidylethanolamine from CDP-diacylglycerol: step 2/2. Its function is as follows. Catalyzes the formation of phosphatidylethanolamine (PtdEtn) from phosphatidylserine (PtdSer). Plays a central role in phospholipid metabolism and in the interorganelle trafficking of phosphatidylserine. Together with psd1 and psd2, responsible for the majority of phosphatidylethanolamine synthesis. The chain is Phosphatidylserine decarboxylase proenzyme 3 from Schizosaccharomyces pombe (strain 972 / ATCC 24843) (Fission yeast).